The following is a 199-amino-acid chain: Protein GrpE (199 aa).

Residues 1–24 (MSKQNKKDWKKFKDEHKEEHKVEN) show a composition bias toward basic and acidic residues. The segment at 1–52 (MSKQNKKDWKKFKDEHKEEHKVENEILEEETDEESQHQEPALGHPSYTALEE) is disordered.

It belongs to the GrpE family. In terms of assembly, homodimer.

The protein localises to the cytoplasm. Participates actively in the response to hyperosmotic and heat shock by preventing the aggregation of stress-denatured proteins, in association with DnaK and GrpE. It is the nucleotide exchange factor for DnaK and may function as a thermosensor. Unfolded proteins bind initially to DnaJ; upon interaction with the DnaJ-bound protein, DnaK hydrolyzes its bound ATP, resulting in the formation of a stable complex. GrpE releases ADP from DnaK; ATP binding to DnaK triggers the release of the substrate protein, thus completing the reaction cycle. Several rounds of ATP-dependent interactions between DnaJ, DnaK and GrpE are required for fully efficient folding. This is Protein GrpE from Legionella pneumophila.